The chain runs to 950 residues: Leucine--tRNA ligase (950 aa).

Positions 41 to 52 (PYPSGDGLHVGH) match the 'HIGH' region motif. Residues 718–722 (KMSKS) carry the 'KMSKS' region motif. Lysine 721 lines the ATP pocket.

This sequence belongs to the class-I aminoacyl-tRNA synthetase family.

It is found in the cytoplasm. It catalyses the reaction tRNA(Leu) + L-leucine + ATP = L-leucyl-tRNA(Leu) + AMP + diphosphate. This is Leucine--tRNA ligase from Rhodopirellula baltica (strain DSM 10527 / NCIMB 13988 / SH1).